The chain runs to 273 residues: NADPH-dependent 7-cyano-7-deazaguanine reductase (273 aa).

80–82 (VES) is a binding site for substrate. Residue 82-83 (SK) participates in NADPH binding. Cysteine 180 functions as the Thioimide intermediate in the catalytic mechanism. The Proton donor role is filled by aspartate 187. 219–220 (HE) is a binding site for substrate. Residue 248 to 249 (RG) participates in NADPH binding.

This sequence belongs to the GTP cyclohydrolase I family. QueF type 2 subfamily. In terms of assembly, homodimer.

It is found in the cytoplasm. The enzyme catalyses 7-aminomethyl-7-carbaguanine + 2 NADP(+) = 7-cyano-7-deazaguanine + 2 NADPH + 3 H(+). The protein operates within tRNA modification; tRNA-queuosine biosynthesis. Functionally, catalyzes the NADPH-dependent reduction of 7-cyano-7-deazaguanine (preQ0) to 7-aminomethyl-7-deazaguanine (preQ1). This Bordetella pertussis (strain Tohama I / ATCC BAA-589 / NCTC 13251) protein is NADPH-dependent 7-cyano-7-deazaguanine reductase.